Reading from the N-terminus, the 201-residue chain is CASP-like protein 2D1 (201 aa).

Topologically, residues 1-26 are cytoplasmic; it reads MRSGEGSTAAAAAAEEEKVKVAAPFR. Residues 27–47 form a helical membrane-spanning segment; that stretch reads LAELGLRVCAVPLAVASVWEM. Topologically, residues 48-70 are extracellular; sequence ATNKQVDETYGEVRFSDLSGFRY. Residues 71–91 traverse the membrane as a helical segment; the sequence is LVWINAITAAYSVASILLSSC. The Cytoplasmic portion of the chain corresponds to 92–98; it reads RFITRFD. Residues 99–119 traverse the membrane as a helical segment; the sequence is WLIFILDQASAYLLLTSASAA. The Extracellular segment spans residues 120-148; that stretch reads AEVVYLAREGDREVSWGEVCSYFGRFCGA. A helical transmembrane segment spans residues 149–169; it reads ATVSVALNAAALLCFMALSLI. The Cytoplasmic segment spans residues 170–201; that stretch reads SAFRVFTKFNPPSQSNSKQQLSQEQGKPVVSG. A compositionally biased stretch (polar residues) spans 180-194; that stretch reads PPSQSNSKQQLSQEQ. Residues 180–201 are disordered; it reads PPSQSNSKQQLSQEQGKPVVSG.

Belongs to the Casparian strip membrane proteins (CASP) family. Homodimer and heterodimers.

The protein localises to the cell membrane. The sequence is that of CASP-like protein 2D1 from Oryza sativa subsp. indica (Rice).